Reading from the N-terminus, the 290-residue chain is Glutamyl-Q tRNA(Asp) synthetase (290 aa).

L-glutamate contacts are provided by residues 9–13 and glutamate 45; that span reads RFAPS. Residues 12-22 carry the 'HIGH' region motif; the sequence is PSPSGSLHFGS. Residues cysteine 101, cysteine 103, tyrosine 115, and cysteine 119 each contribute to the Zn(2+) site. The L-glutamate site is built by tyrosine 170 and arginine 188. Positions 226–230 match the 'KMSKS' region motif; the sequence is KLSKQ. Residue lysine 229 coordinates ATP.

It belongs to the class-I aminoacyl-tRNA synthetase family. GluQ subfamily. Zn(2+) is required as a cofactor.

Functionally, catalyzes the tRNA-independent activation of glutamate in presence of ATP and the subsequent transfer of glutamate onto a tRNA(Asp). Glutamate is transferred on the 2-amino-5-(4,5-dihydroxy-2-cyclopenten-1-yl) moiety of the queuosine in the wobble position of the QUC anticodon. This is Glutamyl-Q tRNA(Asp) synthetase from Shewanella amazonensis (strain ATCC BAA-1098 / SB2B).